The sequence spans 123 residues: Small ribosomal subunit protein uS13 (123 aa).

Residues 95–123 are disordered; it reads GLPVRGQSSKTNARTRKGPRRSVMSRKKK. Residues 107-123 show a composition bias toward basic residues; sequence ARTRKGPRRSVMSRKKK.

Belongs to the universal ribosomal protein uS13 family. As to quaternary structure, part of the 30S ribosomal subunit. Forms a loose heterodimer with protein S19. Forms two bridges to the 50S subunit in the 70S ribosome.

Its function is as follows. Located at the top of the head of the 30S subunit, it contacts several helices of the 16S rRNA. In the 70S ribosome it contacts the 23S rRNA (bridge B1a) and protein L5 of the 50S subunit (bridge B1b), connecting the 2 subunits; these bridges are implicated in subunit movement. Contacts the tRNAs in the A and P-sites. The protein is Small ribosomal subunit protein uS13 of Maridesulfovibrio salexigens (strain ATCC 14822 / DSM 2638 / NCIMB 8403 / VKM B-1763) (Desulfovibrio salexigens).